The sequence spans 160 residues: Archaemetzincin (160 aa).

Position 117 (His117) interacts with Zn(2+). Glu118 serves as the catalytic Proton acceptor. Zn(2+) is bound by residues His121, His127, Cys128, Cys132, Cys151, and Cys154.

This sequence belongs to the peptidase M54 family. In terms of assembly, monomer. Zn(2+) serves as cofactor.

Functionally, probable zinc metalloprotease whose natural substrate is unknown. This chain is Archaemetzincin, found in Archaeoglobus fulgidus (strain ATCC 49558 / DSM 4304 / JCM 9628 / NBRC 100126 / VC-16).